A 310-amino-acid polypeptide reads, in one-letter code: Transcription initiation factor IIB (310 aa).

Residues 9-41 form a TFIIB-type zinc finger; the sequence is DKQTVCPECGSTELIGDYERAEVVCAHCGLVID. Positions 14, 17, 33, and 36 each coordinate Zn(2+). 2 consecutive repeat copies span residues 127–210 and 221–302.

It belongs to the TFIIB family.

Its function is as follows. Stabilizes TBP binding to an archaeal box-A promoter. Also responsible for recruiting RNA polymerase II to the pre-initiation complex (DNA-TBP-TFIIB). The protein is Transcription initiation factor IIB of Methanobrevibacter smithii (strain ATCC 35061 / DSM 861 / OCM 144 / PS).